The following is an 882-amino-acid chain: Alanine--tRNA ligase (882 aa).

Positions 570, 574, 672, and 676 each coordinate Zn(2+).

It belongs to the class-II aminoacyl-tRNA synthetase family. The cofactor is Zn(2+).

Its subcellular location is the cytoplasm. The catalysed reaction is tRNA(Ala) + L-alanine + ATP = L-alanyl-tRNA(Ala) + AMP + diphosphate. Catalyzes the attachment of alanine to tRNA(Ala) in a two-step reaction: alanine is first activated by ATP to form Ala-AMP and then transferred to the acceptor end of tRNA(Ala). Also edits incorrectly charged Ser-tRNA(Ala) and Gly-tRNA(Ala) via its editing domain. The protein is Alanine--tRNA ligase of Xanthomonas campestris pv. campestris (strain ATCC 33913 / DSM 3586 / NCPPB 528 / LMG 568 / P 25).